The following is a 310-amino-acid chain: 300 kDa antigen AG231 (310 aa).

The interval 1–23 (VTGSCVVTGSCVVTDSCVVTGSC) is 4 X 6 AA tandem repeats of V-V-T-G-S-C. Positions 29 to 106 (VTTQESVTTQ…TQEPVTVEEH (78 aa)) are 13 X 6 AA tandem repeats of V-V-[TI]-[QE]-E-[PH]. A compositionally biased stretch (low complexity) spans 53–101 (VTIEEPVTTQEPVTIEEPVTTQEPVTTQEPVTTQEPVTTQEPVTTQEPV). Residues 53 to 310 (VTIEEPVTTQ…FGRGNKNDKK (258 aa)) form a disordered region. Composition is skewed to basic and acidic residues over residues 103–114 (VEEHIDEKKGSE) and 147–160 (NKND…KKPS). The 45 AA repeat 1 repeat unit spans residues 107–152 (IDEKKGSEGDNISLSSLSEETEEKSHTKKKKSSWLKFGRGNKNDKK). Residues 176-190 (TDSQISVNAQDSVTI) show a composition bias toward polar residues. The 13 X 6 AA approximate tandem repeats stretch occupies residues 188 to 265 (VTIQEPTATQ…TQEPSTTQEH (78 aa)). Positions 191 to 235 (QEPTATQEPPTTQELTATQEPTTTQETVTEQEPTTTQETVTAQEP) are enriched in low complexity. Over residues 236-263 (ITTQEPVTAQEPVTTQELIATQEPSTTQ) the composition is skewed to polar residues. The segment covering 264-273 (EHADEKKASE) has biased composition (basic and acidic residues). The 45 AA repeat 2 repeat unit spans residues 266–310 (ADEKKASEGDNISLSRLSEETEEKSHTKKKSSWLKFGRGNKNDKK).

The polypeptide is 300 kDa antigen AG231 (FIRA) (Plasmodium falciparum (isolate FC27 / Papua New Guinea)).